The primary structure comprises 431 residues: Adenylosuccinate synthetase (431 aa).

GTP-binding positions include 12 to 18 and 40 to 42; these read GDEGKGK and GHT. Aspartate 13 (proton acceptor) is an active-site residue. Mg(2+) is bound by residues aspartate 13 and glycine 40. IMP contacts are provided by residues 13–16, 38–41, threonine 131, arginine 145, glutamine 225, threonine 240, and arginine 304; these read DEGK and NAGH. Catalysis depends on histidine 41, which acts as the Proton donor. 300–306 lines the substrate pocket; it reads TNTGRRR. Residues arginine 306, 332-334, and 414-416 contribute to the GTP site; these read KLD and STS.

The protein belongs to the adenylosuccinate synthetase family. Homodimer. Requires Mg(2+) as cofactor.

It is found in the cytoplasm. The enzyme catalyses IMP + L-aspartate + GTP = N(6)-(1,2-dicarboxyethyl)-AMP + GDP + phosphate + 2 H(+). Its pathway is purine metabolism; AMP biosynthesis via de novo pathway; AMP from IMP: step 1/2. Functionally, plays an important role in the de novo pathway of purine nucleotide biosynthesis. Catalyzes the first committed step in the biosynthesis of AMP from IMP. In Methylocella silvestris (strain DSM 15510 / CIP 108128 / LMG 27833 / NCIMB 13906 / BL2), this protein is Adenylosuccinate synthetase.